A 494-amino-acid chain; its full sequence is Alanine--glyoxylate aminotransferase 2-like (494 aa).

K291 bears the N6-(pyridoxal phosphate)lysine mark.

This sequence belongs to the class-III pyridoxal-phosphate-dependent aminotransferase family. Pyridoxal 5'-phosphate is required as a cofactor.

This Drosophila melanogaster (Fruit fly) protein is Alanine--glyoxylate aminotransferase 2-like.